The primary structure comprises 145 residues: uncharacterized protein (145 aa).

The segment at 1–49 (MLSIFKNLLGTSEEDGTTQEANSKDTKGLKEERKRKKRKNKYKIPPGHT) is disordered. Residues 22-32 (NSKDTKGLKEE) are compositionally biased toward basic and acidic residues. Residues 33–42 (RKRKKRKNKY) are compositionally biased toward basic residues. At Ser68 the chain carries Phosphoserine. Residues 69–145 (PISVTAEELA…LKTSFVGYLV (77 aa)) form the Cytochrome b5 heme-binding domain. Residues His104 and His127 each coordinate heme.

This sequence belongs to the cytochrome b5 family.

The protein localises to the cytoplasm. This is an uncharacterized protein from Schizosaccharomyces pombe (strain 972 / ATCC 24843) (Fission yeast).